The primary structure comprises 793 residues: MKYNQYAYVETDFQQQVKELIDINFLPKNYQVWDFSSLLAKLVKNAIAEAKTDAAKNAKLAEFAVSDHQTLADFLKEKPTEIGTEQFYNVALQLLGYHVHYDYDFADPTGFMQRNALPFVQDISDNQKLISAFYRLLNTRAKNGQILLDVMAGKGYFTQFWGQNKFKFFNGKSIPVFDTNKVIREVVYVETDLDTDHDGKSDLIQVTVFRPEETNKGLKVPALYTASPYFGGIIANEKRNHNVDENLSDSTEWNDPQYVHSPIVKAEKPDGSSRPATEEAVHKSSYPLNEYMLARGFASVFAGAIGTRGSDGVRITGAPEETESAAAVIEWLHGDRVAYTDRTRTVQTTADWCNGNIGMTGRSYLGTLQIAIATTGVKGLKTVVSEAAISSWYDYYREHGLVIAPEACQGEDLDLLAETCQSNLWDAGSYLKIKPEYDKMQKQLREKEDRNTGQYSDFWEARNYRHHADGIKCSWISVHGLNDWNVKPKNVYKIWQLVKKMPMKHHLFLHQGPHYNMNNFVSIDFTDFMNLWFVHELLGIENNAYNQWPTVMIQDNLQADKWHEEPDWSNDLGQEKIYYPTDEGELFQDGNGKAQKSFTDVGGIEFKKAGISESDWQYKFICGDEKWAKPSLRFETDEFIHPTTIVGRPEVKVRVSASLPKGEISVALVELGERQRLTATPKFLMRGGQELGYRFGTDTLQEFVPDKKTKAKLITKAHMNLQNFKDMKKPEAIDADKFYDLDFLLQPTYYTIPSGSKLALIIYSTDQGMTKRPLEDETYTIDLANTEIKFYEK.

Active-site charge relay system residues include S363, D483, and H514.

Belongs to the peptidase S15 family. Homodimer.

The protein localises to the cytoplasm. The catalysed reaction is Hydrolyzes Xaa-Pro-|- bonds to release unblocked, N-terminal dipeptides from substrates including Ala-Pro-|-p-nitroanilide and (sequentially) Tyr-Pro-|-Phe-Pro-|-Gly-Pro-|-Ile.. In terms of biological role, removes N-terminal dipeptides sequentially from polypeptides having unsubstituted N-termini provided that the penultimate residue is proline. In Lactobacillus helveticus (strain DPC 4571), this protein is Xaa-Pro dipeptidyl-peptidase.